Reading from the N-terminus, the 65-residue chain is Ovary maturating parsin (65 aa).

Residues 17 to 28 (PAAPAVAPAAPA) show a composition bias toward low complexity. The tract at residues 17–36 (PAAPAVAPAAPASWPHQQRR) is disordered.

Monomer.

Its function is as follows. Neurohormone that anticipates ovarian maturation. Acts as a true gonadotropin and stimulates vitellogenin biosynthesis. The sequence is that of Ovary maturating parsin from Locusta migratoria (Migratory locust).